The following is a 381-amino-acid chain: Mannitol-1-phosphate 5-dehydrogenase (381 aa).

Residue 3–14 (TLHFGAGNIGRG) participates in NAD(+) binding.

This sequence belongs to the mannitol dehydrogenase family.

The enzyme catalyses D-mannitol 1-phosphate + NAD(+) = beta-D-fructose 6-phosphate + NADH + H(+). This Aeromonas salmonicida (strain A449) protein is Mannitol-1-phosphate 5-dehydrogenase.